Reading from the N-terminus, the 104-residue chain is ATP synthase subunit c (104 aa).

The next 2 helical transmembrane spans lie at 37-57 and 83-103; these read LLGAGVAIIGVAGAGIGQGAV and AGIAESGAIYALVVAILLIFV.

This sequence belongs to the ATPase C chain family. As to quaternary structure, F-type ATPases have 2 components, F(1) - the catalytic core - and F(0) - the membrane proton channel. F(1) has five subunits: alpha(3), beta(3), gamma(1), delta(1), epsilon(1). F(0) has three main subunits: a(1), b(2) and c(10-14). The alpha and beta chains form an alternating ring which encloses part of the gamma chain. F(1) is attached to F(0) by a central stalk formed by the gamma and epsilon chains, while a peripheral stalk is formed by the delta and b chains.

The protein localises to the cell membrane. In terms of biological role, f(1)F(0) ATP synthase produces ATP from ADP in the presence of a proton or sodium gradient. F-type ATPases consist of two structural domains, F(1) containing the extramembraneous catalytic core and F(0) containing the membrane proton channel, linked together by a central stalk and a peripheral stalk. During catalysis, ATP synthesis in the catalytic domain of F(1) is coupled via a rotary mechanism of the central stalk subunits to proton translocation. Its function is as follows. Key component of the F(0) channel; it plays a direct role in translocation across the membrane. A homomeric c-ring of between 10-14 subunits forms the central stalk rotor element with the F(1) delta and epsilon subunits. The polypeptide is ATP synthase subunit c (Mesoplasma florum (strain ATCC 33453 / NBRC 100688 / NCTC 11704 / L1) (Acholeplasma florum)).